We begin with the raw amino-acid sequence, 260 residues long: Methanethiol S-methyltransferase (260 aa).

A run of 5 helical transmembrane segments spans residues Cys-27–Val-47, Pro-55–Ala-75, Cys-107–Val-127, Gly-134–Ile-154, and Phe-196–Leu-216.

The protein belongs to the nurim family.

The protein localises to the membrane. It carries out the reaction methanethiol + S-adenosyl-L-methionine = dimethyl sulfide + S-adenosyl-L-homocysteine + H(+). Catalyzes the methylation of methanethiol (MeSH) to yield dimethylsulphide (DMS). The protein is Methanethiol S-methyltransferase of Pseudomonas sp. (strain GM41(2012)).